The following is a 347-amino-acid chain: Methylthioribose-1-phosphate isomerase (347 aa).

Substrate-binding positions include Arg46–Ala48, Arg89, and Gln196. Asp237 (proton donor) is an active-site residue. Asn247–Lys248 contributes to the substrate binding site.

It belongs to the eIF-2B alpha/beta/delta subunits family. MtnA subfamily.

It catalyses the reaction 5-(methylsulfanyl)-alpha-D-ribose 1-phosphate = 5-(methylsulfanyl)-D-ribulose 1-phosphate. It functions in the pathway amino-acid biosynthesis; L-methionine biosynthesis via salvage pathway; L-methionine from S-methyl-5-thio-alpha-D-ribose 1-phosphate: step 1/6. Catalyzes the interconversion of methylthioribose-1-phosphate (MTR-1-P) into methylthioribulose-1-phosphate (MTRu-1-P). This Chloroflexus aurantiacus (strain ATCC 29366 / DSM 635 / J-10-fl) protein is Methylthioribose-1-phosphate isomerase.